Here is a 664-residue protein sequence, read N- to C-terminus: Serine/threonine-protein kinase PknD (664 aa).

Residues 1–381 (MSDAVPQVGS…PAGNKRKVWA (381 aa)) are Cytoplasmic-facing. A Protein kinase domain is found at 15–276 (YQLLRLLGRG…DLAIAAHDAL (262 aa)). ATP-binding positions include 21–29 (LGRGGMGEV) and Lys-44. Thr-135 carries the post-translational modification Phosphothreonine; by autocatalysis. Asp-138 serves as the catalytic Proton acceptor. Residues Thr-169, Thr-171, Thr-173, and Thr-209 each carry the phosphothreonine; by autocatalysis modification. Residues 303-333 (TGLSQSESGIAGAGTGPPTPGAARWSPGDSA) form a disordered region. A helical membrane pass occupies residues 382–402 (VVGAAAIVLVAIVAAAGYLVL). The Extracellular portion of the chain corresponds to 403–664 (RPSWSPTQAS…GNDRVVKLTS (262 aa)). 6 NHL repeats span residues 414–456 (QTVL…LATG), 457–497 (STGT…LAAG), 498–539 (SNNQ…LAAG), 540–581 (SKTQ…LEAE), 582–623 (SNNQ…LLAG), and 624–664 (STTS…KLTS).

Belongs to the protein kinase superfamily. Ser/Thr protein kinase family. In terms of assembly, homodimer. The extracellular domain interacts with host laminin. In terms of processing, autophosphorylated. Dephosphorylated by PstP.

The protein resides in the cell membrane. The catalysed reaction is L-seryl-[protein] + ATP = O-phospho-L-seryl-[protein] + ADP + H(+). It carries out the reaction L-threonyl-[protein] + ATP = O-phospho-L-threonyl-[protein] + ADP + H(+). Its activity is regulated as follows. Dimerization activates the kinase domain of unphosphorylated PknD via an allosteric mechanism, triggering autophosphorylation and phosphorylation of target proteins. Phosphorylated PknD is fully active even in the absence of dimerization. In terms of biological role, part of a signaling pathway that enables adaptation to osmotic stress through cell wall remodeling and virulence factor production. Key microbial factor required for central nervous system tuberculosis. Required for invasion of host brain endothelia, but not macrophages, lung epithelia or other endothelia. In Mycobacterium tuberculosis (strain CDC 1551 / Oshkosh), this protein is Serine/threonine-protein kinase PknD (pknD).